The following is a 401-amino-acid chain: Transcriptional regulator Myc-2 (401 aa).

An O-linked (GlcNAc) threonine glycan is attached at Thr58. Residues 76-84 carry the 9aaTAD motif; it reads EMVSEFLGD. 2 disordered regions span residues 177–251 and 286–325; these read SSKS…SRYP and LESS…HNVL. The span at 205–230 shows a compositional bias: acidic residues; the sequence is DSEDEEEEEEEEEEEEEEEEEEEEID. Basic and acidic residues predominate over residues 233 to 247; the sequence is TVEKRQKRNEAEVSD. Residues 288-297 show a composition bias toward low complexity; that stretch reads SSSSNNSSSN. The bHLH domain occupies 317-369; the sequence is DKRRTHNVLERQRRNELKLSFFALRDEIPEVANNEKAAKVVILKKATECIHSM. The leucine-zipper stretch occupies residues 376-397; that stretch reads LLSIKEQLRRKSEQLKHRLQQL.

As to quaternary structure, efficient DNA binding requires dimerization with another bHLH protein. Binds DNA as a heterodimer with MAX.

It localises to the nucleus. In terms of biological role, transcription factor that binds DNA in a non-specific manner, yet also specifically recognizes the core sequence 5'-CAC[GA]TG-3'. Activates the transcription of growth-related genes. The sequence is that of Transcriptional regulator Myc-2 (mycb) from Cyprinus carpio (Common carp).